The sequence spans 1023 residues: 2-oxoglutarate dehydrogenase complex component E1 (1023 aa).

The transit peptide at 1–40 (MFHLRTCAAKLRPLTASQTVKTFSQNRPAAARTFGQIRCY) directs the protein to the mitochondrion. Lysine 74 carries the N6-succinyllysine modification. Serine 100 carries the phosphoserine modification. Ca(2+) is bound by residues histidine 143, aspartate 156, and aspartate 158. Arginine 312 contacts thiamine diphosphate. Position 401 is an N6-acetyllysine (lysine 401). The thiamine diphosphate site is built by aspartate 411, asparagine 444, and isoleucine 446. Residues aspartate 411, asparagine 444, and isoleucine 446 each coordinate Mg(2+). Lysine 534 is covalently cross-linked (Glycyl lysine isopeptide (Lys-Gly) (interchain with G-Cter in ubiquitin)). Lysine 564 is modified (N6-succinyllysine). A thiamine diphosphate-binding site is contributed by glutamine 676. Lysine 970 is subject to N6-acetyllysine.

It belongs to the alpha-ketoglutarate dehydrogenase family. Homodimer. The 2-oxoglutarate dehydrogenase complex is composed of OGDH (2-oxoglutarate dehydrogenase; E1), DLST (dihydrolipoamide succinyltransferase; E2), DLD (dihydrolipoamide dehydrogenase; E3) and the assembly factor KGD4. It contains multiple copies of the three enzymatic components (E1, E2 and E3). In the nucleus, the 2-oxoglutarate dehydrogenase complex associates with KAT2A. Interacts with ABHD11; this interaction maintains the functional lipoylation of the 2-oxoglutarate dehydrogenase complex. Requires thiamine diphosphate as cofactor. The cofactor is Mg(2+).

It localises to the mitochondrion. The protein resides in the nucleus. It carries out the reaction N(6)-[(R)-lipoyl]-L-lysyl-[protein] + 2-oxoglutarate + H(+) = N(6)-[(R)-S(8)-succinyldihydrolipoyl]-L-lysyl-[protein] + CO2. Its activity is regulated as follows. Calcium ions and ADP stimulate, whereas ATP and NADH reduce catalytic activity. Its function is as follows. 2-oxoglutarate dehydrogenase (E1o) component of the 2-oxoglutarate dehydrogenase complex (OGDHC). Participates in the first step, rate limiting for the overall conversion of 2-oxoglutarate to succinyl-CoA and CO(2) catalyzed by the whole OGDHC. Catalyzes the irreversible decarboxylation of 2-oxoglutarate (alpha-ketoglutarate) via the thiamine diphosphate (ThDP) cofactor and subsequent transfer of the decarboxylated acyl intermediate on an oxidized dihydrolipoyl group that is covalently amidated to the E2 enzyme (dihydrolipoyllysine-residue succinyltransferase or DLST). Plays a key role in the Krebs (citric acid) cycle, which is a common pathway for oxidation of fuel molecules, including carbohydrates, fatty acids, and amino acids. Can catalyze the decarboxylation of 2-oxoadipate in vitro, but at a much lower rate than 2-oxoglutarate. Mainly active in the mitochondrion. A fraction of the 2-oxoglutarate dehydrogenase complex also localizes in the nucleus and is required for lysine succinylation of histones: associates with KAT2A on chromatin and provides succinyl-CoA to histone succinyltransferase KAT2A. The polypeptide is 2-oxoglutarate dehydrogenase complex component E1 (Bos taurus (Bovine)).